The following is a 257-amino-acid chain: Zinc import ATP-binding protein ZnuC (257 aa).

The ABC transporter domain maps to Val-5 to Gln-220. An ATP-binding site is contributed by Gly-37–Ser-44. The disordered stretch occupies residues His-234–Ala-257.

It belongs to the ABC transporter superfamily. Zinc importer (TC 3.A.1.15.5) family. As to quaternary structure, the complex is composed of two ATP-binding proteins (ZnuC), two transmembrane proteins (ZnuB) and a solute-binding protein (ZnuA).

The protein resides in the cell inner membrane. The enzyme catalyses Zn(2+)(out) + ATP(in) + H2O(in) = Zn(2+)(in) + ADP(in) + phosphate(in) + H(+)(in). In terms of biological role, part of the ABC transporter complex ZnuABC involved in zinc import. Responsible for energy coupling to the transport system. The polypeptide is Zinc import ATP-binding protein ZnuC (Photobacterium profundum (strain SS9)).